Reading from the N-terminus, the 333-residue chain is Polygalacturonase inhibitor (333 aa).

Positions 1 to 27 are cleaved as a signal peptide; it reads METSKLFLLSSSLLLVLLATRPCPSLS. Intrachain disulfides connect C30-C60 and C61-C68. LRR repeat units follow at residues 72–96, 97–120, 121–144, 145–169, 170–192, 194–220, 221–240, 241–263, 264–288, and 290–312; these read THRI…VGDL, PFLE…AIAK, LKHL…FFSE, LKNL…LSLL, PNLG…SFGK, AGST…GFDP, NVMD…FFNA, NKST…RVEF, PKSL…MTSL, and LQFL…KLQS. N-linked (GlcNAc...) asparagine glycans are attached at residues N109, N133, N147, and N157. Residue N241 is glycosylated (N-linked (GlcNAc...) asparagine). A glycan (N-linked (GlcNAc...) asparagine) is linked at N294. 2 disulfide bridges follow: C301–C323 and C325–C332.

The protein belongs to the polygalacturonase-inhibiting protein family.

It localises to the secreted. The protein resides in the cell wall. The protein localises to the membrane. In terms of biological role, inhibitor of fungal polygalacturonase. It is an important factor for plant resistance to phytopathogenic fungi. The sequence is that of Polygalacturonase inhibitor (pgip) from Vitis vinifera (Grape).